Here is a 69-residue protein sequence, read N- to C-terminus: NADH dehydrogenase [ubiquinone] 1 beta subcomplex subunit 2 (69 aa).

This sequence belongs to the complex I NDUFB2 subunit family. Complex I is composed of at least 49 different subunits.

Its subcellular location is the mitochondrion inner membrane. Functionally, accessory subunit of the mitochondrial membrane respiratory chain NADH dehydrogenase (Complex I), that is believed not to be involved in catalysis. Complex I functions in the transfer of electrons from NADH to the respiratory chain. The immediate electron acceptor for the enzyme is believed to be ubiquinone. The protein is NADH dehydrogenase [ubiquinone] 1 beta subcomplex subunit 2 of Arabidopsis thaliana (Mouse-ear cress).